A 418-amino-acid polypeptide reads, in one-letter code: Tyrosine--tRNA ligase (418 aa).

An L-tyrosine-binding site is contributed by Tyr34. Positions 39-48 (PTADSLHLGH) match the 'HIGH' region motif. Positions 169 and 173 each coordinate L-tyrosine. The short motif at 229–233 (KFGKS) is the 'KMSKS' region element. Residue Lys232 participates in ATP binding. Residues 352–418 (LNLVDMLVTA…GKKKYAVLTY (67 aa)) enclose the S4 RNA-binding domain.

This sequence belongs to the class-I aminoacyl-tRNA synthetase family. TyrS type 1 subfamily. As to quaternary structure, homodimer.

Its subcellular location is the cytoplasm. It catalyses the reaction tRNA(Tyr) + L-tyrosine + ATP = L-tyrosyl-tRNA(Tyr) + AMP + diphosphate + H(+). Its function is as follows. Catalyzes the attachment of tyrosine to tRNA(Tyr) in a two-step reaction: tyrosine is first activated by ATP to form Tyr-AMP and then transferred to the acceptor end of tRNA(Tyr). The polypeptide is Tyrosine--tRNA ligase (Streptococcus pyogenes serotype M28 (strain MGAS6180)).